The sequence spans 1020 residues: Nucleotide-binding oligomerization domain-containing protein 2 (1020 aa).

CARD domains lie at 6-104 (CDMC…GSWD) and 106-200 (HSLH…AECQ). An ATG16L1-binding motif motif is present at residues 43–57 (WDVLSREDYEGLSLP). ADP is bound by residues Thr219, Tyr232, Thr233, Gly282, Ser283, Gly284, Lys285, Ser286, and Thr287. Residues 221 to 254 (DGSENLCLEDIYTENILELQTEVGTAGALQKSPA) are required for CARD9 binding. The NACHT domain maps to 273 to 600 (DTILVVGEAG…AAFYLAVSAD (328 aa)). Cys375 is lipidated: S-palmitoyl cysteine. His583 contributes to the ADP binding site. 10 LRR repeats span residues 685 to 709 (ARAR…VPGE), 726 to 749 (LYEM…HLKL), 766 to 792 (LQHL…QLRP), 794 to 817 (LGVC…TLVE), 822 to 845 (CEQL…SMAK), 850 to 873 (KQNF…VLAQ), 906 to 929 (HQNL…ALAL), 934 to 962 (NKSL…LKRN), 963 to 985 (STLK…ALLQ), and 1005 to 1019 (LEEI…ARLL).

This sequence belongs to the NOD1-NOD2 family. Homooligomer: homooligomerizes following muramyl dipeptide (MDP)-binding, promoting RIPK2 recruitment. Interacts (via CARD domain) with RIPK2 (via CARD domain). Following RIPK2 recruitment, RIPK2 homooligomerizes via its CARD domain and forms long filaments named RIPosomes. Interacts (via CARD domain) with ubiquitin; inhibiting interaction with RIPK2. Component of a signaling complex consisting of ARHGEF2, NOD2 and RIPK2. Interacts with ANKRD17 (via N-terminus). Interacts with HSPA1A; the interaction enhances NOD2 stability. Interacts (via both CARD domains) with HSP90; the interaction enhances NOD2 stability. Interacts (via CARD domain) with SOCS3; the interaction promotes NOD2 degradation. Interacts (via CARD domain) with ERBIN; the interaction inhibits activation of NOD2. Interacts with MAPKBP1; the interaction is enhanced in the presence of muramyl dipeptide (MDP) and inhibits NOD2 homooligomerization and activation. Interacts with INAVA; the interaction takes place upon Pattern recognition receptor (PRR) stimulation. Interacts (via NACHT domain) with CARD9. Interacts (via CARD domain) with CASP1; this interaction leads to IL1B processing. Also interacts with CASP4. Interacts with NLRP1; this interaction is enhanced in the presence of muramyl dipeptide (MDP) and leads to increased IL1B release. Interacts with NLRP12; this interaction promotes degradation of NOD2 through the ubiquitin-proteasome pathway. Interacts with ANKHD1, C10orf67, CHMP5, DOCK7, ENTR1, KRT15, LDOC1, PPP1R12C, PPP2R3B, TRIM41 and VIM. Interacts with MAVS; interaction takes place following single-stranded RNA (ssRNA)-binding. Interacts with ATG16L1. Interacts with Irgm1; promoting Irgm1 'Lys-63'-linked polyubiquitination, which is required for interactions with the core autophagy factors. Palmitoylated by ZDHHC5; palmitoylation is required for proper recruitment to the bacterial entry site and hence for proper signaling upon cognate peptidoglycan detection. Palmitoylation promotes localization to the cell membrane. Palmitoylation protects from SQSTM1/p62-dependent autophagic degradation. In terms of processing, polyubiquitinated by TRIM27, leading to proteasome-mediated degradation. Polyubiquitinated and degraded following muramyl dipeptide (MDP) stimulation, conferring MDP tolerance and preventing septic shock. Post-translationally, degraded via selective autophagy following interaction with Irgm1. Irgm1 promotes NOD2-RIPK2 RIPosome recruitment to autophagosome membranes, promoting their SQSTM1/p62-dependent autophagic degradation. O-glycosylated by OGT, O-GlcNAcylation increases protein stability. In terms of tissue distribution, expressed in monocytes, macrophages, dendritic cells, hepatocytes, preadipocytes, epithelial cells of oral cavity, lung and intestine. In intestine, highly expressed in ileal Paneth cells of the crypt and in intestinal stem cells. Also expressed in neurons of several brain regions including the hypothalamus.

It is found in the cell membrane. It localises to the basolateral cell membrane. The protein localises to the cytoplasm. The protein resides in the mitochondrion. With respect to regulation, ADP-binding promotes an inactive closed conformation. Functionally, pattern recognition receptor (PRR) that detects bacterial peptidoglycan fragments and other danger signals and plays an important role in gastrointestinal immunity. Specifically activated by muramyl dipeptide (MDP), a fragment of bacterial peptidoglycan found in every bacterial peptidoglycan type. NOD2 specifically recognizes and binds 6-O-phospho-MDP, the phosphorylated form of MDP, which is generated by NAGK. 6-O-phospho-MDP-binding triggers oligomerization that facilitates the binding and subsequent activation of the proximal adapter receptor-interacting RIPK2. Following recruitment, RIPK2 undergoes 'Met-1'- (linear) and 'Lys-63'-linked polyubiquitination by E3 ubiquitin-protein ligases XIAP, BIRC2, BIRC3 and the LUBAC complex, becoming a scaffolding protein for downstream effectors, triggering activation of the NF-kappa-B and MAP kinases signaling. This in turn leads to the transcriptional activation of hundreds of genes involved in immune response. Its ability to detect bacterial MDP plays a central role in maintaining the equilibrium between intestinal microbiota and host immune responses to control inflammation. An imbalance in this relationship results in dysbiosis, whereby pathogenic bacteria prevail on commensals, causing damage in the intestinal epithelial barrier as well as allowing bacterial invasion and inflammation. Acts as a regulator of appetite by sensing MDP in a subset of brain neurons: microbiota-derived MDP reach the brain, where they bind and activate NOD2 in inhibitory hypothalamic neurons, decreasing neuronal activity, thereby regulating satiety and body temperature. NOD2-dependent MDP-sensing of bacterial cell walls in the intestinal epithelial compartment contributes to sustained postnatal growth upon undernutrition. Also plays a role in antiviral response by acting as a sensor of single-stranded RNA (ssRNA) from viruses: upon ssRNA-binding, interacts with MAVS, leading to activation of interferon regulatory factor-3/IRF3 and expression of type I interferon. Also acts as a regulator of autophagy in dendritic cells via its interaction with ATG16L1, possibly by recruiting ATG16L1 at the site of bacterial entry. NOD2 activation in the small intestine crypt also contributes to intestinal stem cells survival and function: acts by promoting mitophagy via its association with ATG16L1. In addition to its main role in innate immunity, also regulates the adaptive immune system by acting as regulator of helper T-cell and regulatory T-cells (Tregs). Besides recognizing pathogens, also involved in the endoplasmic reticulum stress response: acts by sensing and binding to the cytosolic metabolite sphingosine-1-phosphate generated in response to endoplasmic reticulum stress, initiating an inflammation process that leads to activation of the NF-kappa-B and MAP kinases signaling. May also be involved in NLRP1 activation following activation by MDP, leading to CASP1 activation and IL1B release in macrophages. The sequence is that of Nucleotide-binding oligomerization domain-containing protein 2 from Mus musculus (Mouse).